A 372-amino-acid polypeptide reads, in one-letter code: Cell division protein FtsZ 1 (372 aa).

Residues 51-55, 138-140, glutamate 169, arginine 173, and aspartate 216 contribute to the GTP site; these read GAGCN and GTG. The interval 351–372 is disordered; sequence QEETPEPSEEEVPPVKIDIPEL. Acidic residues predominate over residues 353 to 362; the sequence is ETPEPSEEEV.

The protein belongs to the FtsZ family. In terms of assembly, homodimer. Polymerizes to form a dynamic ring structure in a strictly GTP-dependent manner. Interacts directly with several other division proteins.

It is found in the cytoplasm. Functionally, essential cell division protein that forms a contractile ring structure (Z ring) at the future cell division site. The regulation of the ring assembly controls the timing and the location of cell division. One of the functions of the FtsZ ring is to recruit other cell division proteins to the septum to produce a new cell wall between the dividing cells. Binds GTP and shows GTPase activity. This chain is Cell division protein FtsZ 1, found in Pyrococcus abyssi (strain GE5 / Orsay).